We begin with the raw amino-acid sequence, 326 residues long: Malate dehydrogenase (326 aa).

11–17 (GAAGQIG) contacts NAD(+). Residues Arg-92 and Arg-98 each contribute to the substrate site. NAD(+) contacts are provided by residues Asn-105, Gln-112, and 129–131 (VGN). Substrate-binding residues include Asn-131 and Arg-162. His-187 acts as the Proton acceptor in catalysis.

It belongs to the LDH/MDH superfamily. MDH type 2 family.

It carries out the reaction (S)-malate + NAD(+) = oxaloacetate + NADH + H(+). Its function is as follows. Catalyzes the reversible oxidation of malate to oxaloacetate. The polypeptide is Malate dehydrogenase (Leptospira interrogans serogroup Icterohaemorrhagiae serovar Lai (strain 56601)).